The sequence spans 392 residues: tRNA (guanine(26)-N(2)/guanine(27)-N(2))-dimethyltransferase (392 aa).

In terms of domain architecture, Trm1 methyltransferase spans 2 to 375; it reads EIVQEGIAKI…LSFEEVMKKM (374 aa). Residues Arg36, Arg66, Asp84, Glu113, and Ala114 each contribute to the S-adenosyl-L-methionine site. Cys247, Cys250, Cys266, and Cys269 together coordinate Zn(2+).

The protein belongs to the class I-like SAM-binding methyltransferase superfamily. Trm1 family.

The catalysed reaction is guanosine(26)/guanosine(27) in tRNA + 4 S-adenosyl-L-methionine = N(2)-dimethylguanosine(26)/N(2)-dimethylguanosine(27) in tRNA + 4 S-adenosyl-L-homocysteine + 4 H(+). Functionally, dimethylates the guanine residues at position 26 and 27 of one or more tRNAs using S-adenosyl-L-methionine as donor of the methyl groups. The polypeptide is tRNA (guanine(26)-N(2)/guanine(27)-N(2))-dimethyltransferase (Aquifex aeolicus (strain VF5)).